Reading from the N-terminus, the 239-residue chain is Cysteine-rich venom protein ophanin (239 aa).

The first 18 residues, 1-18 (MIAFTLLSLAAVLQQSFG), serve as a signal peptide directing secretion. Residues 37 to 165 (VDLHNSLRRS…EYSYFYVCQY (129 aa)) enclose the SCP domain. 8 cysteine pairs are disulfide-bonded: C74–C152, C91–C166, C147–C163, C185–C192, C188–C197, C201–C234, C210–C228, and C219–C232. One can recognise a ShKT domain in the interval 201–234 (CTLYNEYTNCDSLVKQSSCQDEWIKSKCPASCFC).

Expressed by the venom gland.

Its subcellular location is the secreted. Weakly blocks contraction of smooth muscle elicited by high potassium-induced depolarization, but does not block caffeine-stimulated contraction. May target voltage-gated calcium channels on smooth muscle. The chain is Cysteine-rich venom protein ophanin from Ophiophagus hannah (King cobra).